Reading from the N-terminus, the 524-residue chain is Glutamyl-tRNA(Gln) amidotransferase subunit A, mitochondrial (524 aa).

Residues Lys-76 and Ser-171 each act as charge relay system in the active site. The active-site Acyl-ester intermediate is the Ser-195.

Belongs to the amidase family. GatA subfamily. In terms of assembly, subunit of the heterotrimeric GatCAB amidotransferase (AdT) complex, composed of A (qrsl1), B (gatb) and C (gatc) subunits.

It is found in the mitochondrion. The catalysed reaction is L-glutamyl-tRNA(Gln) + L-glutamine + ATP + H2O = L-glutaminyl-tRNA(Gln) + L-glutamate + ADP + phosphate + H(+). In terms of biological role, allows the formation of correctly charged Gln-tRNA(Gln) through the transamidation of misacylated Glu-tRNA(Gln) in the mitochondria. The reaction takes place in the presence of glutamine and ATP through an activated gamma-phospho-Glu-tRNA(Gln). The protein is Glutamyl-tRNA(Gln) amidotransferase subunit A, mitochondrial (qrsl1) of Xenopus laevis (African clawed frog).